The following is a 335-amino-acid chain: Eukaryotic translation initiation factor 3 subunit I (335 aa).

WD repeat units lie at residues 8–47 (GHERALTQIRYNRDGDIIFSTAKDQHICAWYAHNGERLGT), 50–91 (GHQG…KTWD), 145–184 (CAESKATVAGWSYMSKYIIAGHEDGSVSQYDAKTGELLFN), 189–228 (EPDLQVTDLQWSPDRTYFITASKDKTAKLVNARDLEVMKT), and 286–325 (GHFGPLNTVAVDPNGKGYASGGEDGYVRVHQFDKGYFDFT).

The protein belongs to the eIF-3 subunit I family. In terms of assembly, component of the eukaryotic translation initiation factor 3 (eIF-3) complex.

It is found in the cytoplasm. In terms of biological role, component of the eukaryotic translation initiation factor 3 (eIF-3) complex, which is involved in protein synthesis of a specialized repertoire of mRNAs and, together with other initiation factors, stimulates binding of mRNA and methionyl-tRNAi to the 40S ribosome. The eIF-3 complex specifically targets and initiates translation of a subset of mRNAs involved in cell proliferation. This is Eukaryotic translation initiation factor 3 subunit I (tif34) from Botryotinia fuckeliana (strain B05.10) (Noble rot fungus).